The chain runs to 327 residues: tRNA uridine(34) hydroxylase (327 aa).

One can recognise a Rhodanese domain in the interval 130–224 (LDEDTVVLDT…YGKDPEVQGE (95 aa)). The Cysteine persulfide intermediate role is filled by cysteine 184.

The protein belongs to the TrhO family.

It catalyses the reaction uridine(34) in tRNA + AH2 + O2 = 5-hydroxyuridine(34) in tRNA + A + H2O. Catalyzes oxygen-dependent 5-hydroxyuridine (ho5U) modification at position 34 in tRNAs. The sequence is that of tRNA uridine(34) hydroxylase from Streptococcus thermophilus (strain ATCC BAA-250 / LMG 18311).